The primary structure comprises 333 residues: Fructose-1,6-bisphosphatase class 1 1 (333 aa).

Residues Glu-81, Asp-100, Leu-102, and Asp-103 each coordinate Mg(2+). Substrate contacts are provided by residues 103-106 (DGSS) and Asn-191. Glu-263 is a Mg(2+) binding site.

The protein belongs to the FBPase class 1 family. Homotetramer. Mg(2+) is required as a cofactor.

Its subcellular location is the cytoplasm. It catalyses the reaction beta-D-fructose 1,6-bisphosphate + H2O = beta-D-fructose 6-phosphate + phosphate. It participates in carbohydrate biosynthesis; Calvin cycle. The protein is Fructose-1,6-bisphosphatase class 1 1 of Cereibacter sphaeroides (strain ATCC 17025 / ATH 2.4.3) (Rhodobacter sphaeroides).